We begin with the raw amino-acid sequence, 128 residues long: Centrosomal protein 15 (128 aa).

It is found in the cell projection. The protein resides in the cilium. Functionally, may play a role in ciliary assembly. This is Centrosomal protein 15 from Homo sapiens (Human).